Consider the following 461-residue polypeptide: L-seryl-tRNA(Sec) selenium transferase (461 aa).

Lys-294 carries the post-translational modification N6-(pyridoxal phosphate)lysine.

This sequence belongs to the SelA family. It depends on pyridoxal 5'-phosphate as a cofactor.

Its subcellular location is the cytoplasm. It carries out the reaction L-seryl-tRNA(Sec) + selenophosphate + H(+) = L-selenocysteinyl-tRNA(Sec) + phosphate. Its pathway is aminoacyl-tRNA biosynthesis; selenocysteinyl-tRNA(Sec) biosynthesis; selenocysteinyl-tRNA(Sec) from L-seryl-tRNA(Sec) (bacterial route): step 1/1. Functionally, converts seryl-tRNA(Sec) to selenocysteinyl-tRNA(Sec) required for selenoprotein biosynthesis. The protein is L-seryl-tRNA(Sec) selenium transferase of Haemophilus influenzae (strain 86-028NP).